Consider the following 234-residue polypeptide: NLP effector protein Pc576423 (234 aa).

Residues 1–18 (MNLRAIAVTFATFAGANA) form the signal peptide. N-linked (GlcNAc...) asparagine glycans are attached at residues Asn-35 and Asn-66. The Hepta-peptide GHRHDWE motif signature appears at 119–125 (GHRHDWE).

The protein belongs to the Necrosis inducing protein (NPP1) family.

The protein localises to the secreted. In terms of biological role, secreted effector that contributes strongly to virulence during infection by P.capsici. This Phytophthora capsici protein is NLP effector protein Pc576423.